A 96-amino-acid chain; its full sequence is Small ribosomal subunit protein bS6 (96 aa).

The protein belongs to the bacterial ribosomal protein bS6 family.

Functionally, binds together with bS18 to 16S ribosomal RNA. This is Small ribosomal subunit protein bS6 from Streptococcus pyogenes serotype M1.